Consider the following 509-residue polypeptide: Maturase K (509 aa).

It belongs to the intron maturase 2 family. MatK subfamily.

Its subcellular location is the plastid. The protein resides in the chloroplast. Usually encoded in the trnK tRNA gene intron. Probably assists in splicing its own and other chloroplast group II introns. The polypeptide is Maturase K (Vachellia farnesiana (Sweet acacia)).